A 157-amino-acid chain; its full sequence is Cuticle protein 19 (157 aa).

Repeat copies occupy residues 11 to 14 (AAPA), 18 to 21 (AAPA), 24 to 27 (AAPA), 29 to 32 (AAPA), 39 to 42 (AAPA), and 47 to 50 (AAPA). Residues 56–127 (YPKYAFEYGV…SGPSAHPAPA (72 aa)) form the Chitin-binding type R&amp;R domain. Residues 141–144 (AAPA) form repeat 7.

Component of the cuticle of migratory locust which contains more than 100 different structural proteins. This is Cuticle protein 19 from Locusta migratoria (Migratory locust).